The chain runs to 447 residues: Protein king tubby (447 aa).

2 stretches are compositionally biased toward low complexity: residues 71 to 92 (GTGP…YSDS) and 157 to 169 (NNNN…NSSS). The segment at 71–196 (GTGPNVTATS…GGAPDTEGDV (126 aa)) is disordered.

The protein belongs to the TUB family.

The protein localises to the cytoplasm. It is found in the nucleus. The protein is Protein king tubby of Anopheles gambiae (African malaria mosquito).